A 192-amino-acid polypeptide reads, in one-letter code: Probable molybdenum cofactor guanylyltransferase (192 aa).

GTP contacts are provided by residues 8 to 10 (LAG), lysine 20, aspartate 69, and aspartate 94. Mg(2+) is bound at residue aspartate 94.

Belongs to the MobA family. It depends on Mg(2+) as a cofactor.

It localises to the cytoplasm. The enzyme catalyses Mo-molybdopterin + GTP + H(+) = Mo-molybdopterin guanine dinucleotide + diphosphate. Functionally, transfers a GMP moiety from GTP to Mo-molybdopterin (Mo-MPT) cofactor (Moco or molybdenum cofactor) to form Mo-molybdopterin guanine dinucleotide (Mo-MGD) cofactor. This chain is Probable molybdenum cofactor guanylyltransferase, found in Pyrococcus horikoshii (strain ATCC 700860 / DSM 12428 / JCM 9974 / NBRC 100139 / OT-3).